A 191-amino-acid chain; its full sequence is Recombination protein RecR (191 aa).

The C4-type zinc finger occupies 51-66; that stretch reads CQTCFHLSADPECEIC. The region spanning 74–168 is the Toprim domain; sequence GVICVVADSR…SVSRIAYGLP (95 aa).

Belongs to the RecR family.

Functionally, may play a role in DNA repair. It seems to be involved in an RecBC-independent recombinational process of DNA repair. It may act with RecF and RecO. The chain is Recombination protein RecR from Synechococcus sp. (strain CC9605).